We begin with the raw amino-acid sequence, 127 residues long: MANFLTKNFVWILAAGVGVWFYQKADNAAKTATKPIADFLAELQFLVNGSNYVKFPNAGFVLTRDALQDDFIAYDDRIKAWLGTHDRHKDFLAEILDHERRVKPVYRKLIGNIIDASTIRAASGVEL.

The protein localises to the virion membrane. The protein is Protein P6 (VI) of Pseudoalteromonas espejiana (Bacteriophage PM2).